Here is a 299-residue protein sequence, read N- to C-terminus: Acetylglutamate kinase (299 aa).

Substrate is bound by residues 70–71 (GG), Arg92, and Asn186.

The protein belongs to the acetylglutamate kinase family. ArgB subfamily.

The protein localises to the cytoplasm. The catalysed reaction is N-acetyl-L-glutamate + ATP = N-acetyl-L-glutamyl 5-phosphate + ADP. It participates in amino-acid biosynthesis; L-arginine biosynthesis; N(2)-acetyl-L-ornithine from L-glutamate: step 2/4. In terms of biological role, catalyzes the ATP-dependent phosphorylation of N-acetyl-L-glutamate. This is Acetylglutamate kinase from Thermoanaerobacter sp. (strain X514).